The following is a 227-amino-acid chain: Cytochrome c oxidase subunit 2 (227 aa).

Residues 1–14 (MAYPFQLGLQDATS) lie on the Mitochondrial intermembrane side of the membrane. A helical membrane pass occupies residues 15–45 (PIMEELTNFHDHTLMIVFLISTLVLYIISLM). The Mitochondrial matrix portion of the chain corresponds to 46–59 (LTTKLTHTSTMDAQ). A helical transmembrane segment spans residues 60 to 87 (EVETIWTILPAVILILIALPSLRILYMM). Residues 88–227 (DEINNPALTV…YFEDWSASMI (140 aa)) lie on the Mitochondrial intermembrane side of the membrane. Residues His161, Cys196, Glu198, Cys200, His204, and Met207 each coordinate Cu cation. Glu198 is a binding site for Mg(2+). Tyr218 bears the Phosphotyrosine mark.

Belongs to the cytochrome c oxidase subunit 2 family. Component of the cytochrome c oxidase (complex IV, CIV), a multisubunit enzyme composed of 14 subunits. The complex is composed of a catalytic core of 3 subunits MT-CO1, MT-CO2 and MT-CO3, encoded in the mitochondrial DNA, and 11 supernumerary subunits COX4I, COX5A, COX5B, COX6A, COX6B, COX6C, COX7A, COX7B, COX7C, COX8 and NDUFA4, which are encoded in the nuclear genome. The complex exists as a monomer or a dimer and forms supercomplexes (SCs) in the inner mitochondrial membrane with NADH-ubiquinone oxidoreductase (complex I, CI) and ubiquinol-cytochrome c oxidoreductase (cytochrome b-c1 complex, complex III, CIII), resulting in different assemblies (supercomplex SCI(1)III(2)IV(1) and megacomplex MCI(2)III(2)IV(2)). Found in a complex with TMEM177, COA6, COX18, COX20, SCO1 and SCO2. Interacts with TMEM177 in a COX20-dependent manner. Interacts with COX20. Interacts with COX16. It depends on Cu cation as a cofactor.

It localises to the mitochondrion inner membrane. It catalyses the reaction 4 Fe(II)-[cytochrome c] + O2 + 8 H(+)(in) = 4 Fe(III)-[cytochrome c] + 2 H2O + 4 H(+)(out). In terms of biological role, component of the cytochrome c oxidase, the last enzyme in the mitochondrial electron transport chain which drives oxidative phosphorylation. The respiratory chain contains 3 multisubunit complexes succinate dehydrogenase (complex II, CII), ubiquinol-cytochrome c oxidoreductase (cytochrome b-c1 complex, complex III, CIII) and cytochrome c oxidase (complex IV, CIV), that cooperate to transfer electrons derived from NADH and succinate to molecular oxygen, creating an electrochemical gradient over the inner membrane that drives transmembrane transport and the ATP synthase. Cytochrome c oxidase is the component of the respiratory chain that catalyzes the reduction of oxygen to water. Electrons originating from reduced cytochrome c in the intermembrane space (IMS) are transferred via the dinuclear copper A center (CU(A)) of subunit 2 and heme A of subunit 1 to the active site in subunit 1, a binuclear center (BNC) formed by heme A3 and copper B (CU(B)). The BNC reduces molecular oxygen to 2 water molecules using 4 electrons from cytochrome c in the IMS and 4 protons from the mitochondrial matrix. The protein is Cytochrome c oxidase subunit 2 (MT-CO2) of Hybomys univittatus (Peter's striped mouse).